The sequence spans 486 residues: Glutamyl-tRNA(Gln) amidotransferase subunit A (486 aa).

Catalysis depends on charge relay system residues lysine 76 and serine 151. The active-site Acyl-ester intermediate is serine 175.

It belongs to the amidase family. GatA subfamily. Heterotrimer of A, B and C subunits.

It carries out the reaction L-glutamyl-tRNA(Gln) + L-glutamine + ATP + H2O = L-glutaminyl-tRNA(Gln) + L-glutamate + ADP + phosphate + H(+). Allows the formation of correctly charged Gln-tRNA(Gln) through the transamidation of misacylated Glu-tRNA(Gln) in organisms which lack glutaminyl-tRNA synthetase. The reaction takes place in the presence of glutamine and ATP through an activated gamma-phospho-Glu-tRNA(Gln). The sequence is that of Glutamyl-tRNA(Gln) amidotransferase subunit A from Marinomonas sp. (strain MWYL1).